The primary structure comprises 559 residues: Proton-coupled zinc antiporter SLC30A9, mitochondrial (559 aa).

The tract at residues serine 58–proline 96 is disordered. 5 consecutive transmembrane segments (helical) span residues valine 230–valine 250, glycine 305–leucine 325, leucine 333–valine 353, alanine 389–glycine 409, and serine 415–threonine 435. An LXXLL motif motif is present at residues leucine 453–leucine 457.

It belongs to the cation diffusion facilitator (CDF) transporter (TC 2.A.4) family. SLC30A subfamily.

The protein resides in the mitochondrion membrane. The protein localises to the nucleus. It is found in the endoplasmic reticulum. The enzyme catalyses Zn(2+)(in) + 2 H(+)(out) = Zn(2+)(out) + 2 H(+)(in). In terms of biological role, mitochondrial proton-coupled zinc ion antiporter mediating the export of zinc from the mitochondria and involved in zinc homeostasis, zinc mobilization as well as mitochondrial morphology and health. In nucleus, may function as a secondary coactivator for nuclear receptors. The chain is Proton-coupled zinc antiporter SLC30A9, mitochondrial (slc30a9) from Xenopus laevis (African clawed frog).